A 211-amino-acid chain; its full sequence is Proteasome subunit beta (211 aa).

Residues 1–8 (MNQTLETG) constitute a propeptide, removed in mature form; by autocatalysis. The active-site Nucleophile is threonine 9.

Belongs to the peptidase T1B family. The 20S proteasome core is composed of 14 alpha and 14 beta subunits that assemble into four stacked heptameric rings, resulting in a barrel-shaped structure. The two inner rings, each composed of seven catalytic beta subunits, are sandwiched by two outer rings, each composed of seven alpha subunits. The catalytic chamber with the active sites is on the inside of the barrel. Has a gated structure, the ends of the cylinder being occluded by the N-termini of the alpha-subunits. Is capped at one or both ends by the proteasome regulatory ATPase, PAN.

It localises to the cytoplasm. The catalysed reaction is Cleavage of peptide bonds with very broad specificity.. The formation of the proteasomal ATPase PAN-20S proteasome complex, via the docking of the C-termini of PAN into the intersubunit pockets in the alpha-rings, triggers opening of the gate for substrate entry. Interconversion between the open-gate and close-gate conformations leads to a dynamic regulation of the 20S proteasome proteolysis activity. Component of the proteasome core, a large protease complex with broad specificity involved in protein degradation. The T.acidophilum proteasome is able to cleave oligopeptides after Tyr, Leu, Phe, and to a lesser extent after Glu and Arg. Thus, displays chymotrypsin-like activity and low level of caspase-like and trypsin-like activities. The chain is Proteasome subunit beta from Thermoplasma acidophilum (strain ATCC 25905 / DSM 1728 / JCM 9062 / NBRC 15155 / AMRC-C165).